Consider the following 113-residue polypeptide: Carrot ABA-induced in somatic embryos 3 (113 aa).

Composition is skewed to basic and acidic residues over residues 1 to 17 (MASG…RAKQ), 32 to 52 (EAQE…KEQL), and 65 to 77 (GETR…KEGY). Residues 1-113 (MASGQEKRSE…IDQSKFRTKS (113 aa)) form a disordered region.

Belongs to the small hydrophilic plant seed protein family. As to expression, expressed in embryogenic cells, somatic embryos and seeds at the later stages of development. Not detected in leaves.

In Daucus carota (Wild carrot), this protein is Carrot ABA-induced in somatic embryos 3.